Consider the following 415-residue polypeptide: Multidrug resistance protein MdtA (415 aa).

The first 21 residues, 1-21, serve as a signal peptide directing secretion; sequence MKGSYKSRWVIVIVVVIAAIA. 2 disordered regions span residues 32–59 and 392–415; these read SRSA…SGPL and EAQS…GARS. Residues 399–415 are compositionally biased toward basic and acidic residues; it reads SEEKATSREYAKKGARS.

This sequence belongs to the membrane fusion protein (MFP) (TC 8.A.1) family. As to quaternary structure, part of a tripartite efflux system composed of MdtA, MdtB and MdtC.

It is found in the cell inner membrane. In terms of biological role, the MdtABC tripartite complex confers resistance against novobiocin and deoxycholate. The polypeptide is Multidrug resistance protein MdtA (Escherichia coli (strain SMS-3-5 / SECEC)).